A 120-amino-acid chain; its full sequence is Large ribosomal subunit protein uL22 (120 aa).

This sequence belongs to the universal ribosomal protein uL22 family. In terms of assembly, part of the 50S ribosomal subunit.

This protein binds specifically to 23S rRNA; its binding is stimulated by other ribosomal proteins, e.g. L4, L17, and L20. It is important during the early stages of 50S assembly. It makes multiple contacts with different domains of the 23S rRNA in the assembled 50S subunit and ribosome. In terms of biological role, the globular domain of the protein is located near the polypeptide exit tunnel on the outside of the subunit, while an extended beta-hairpin is found that lines the wall of the exit tunnel in the center of the 70S ribosome. This is Large ribosomal subunit protein uL22 from Crocosphaera subtropica (strain ATCC 51142 / BH68) (Cyanothece sp. (strain ATCC 51142)).